Consider the following 151-residue polypeptide: Large ribosomal subunit protein bL9 (151 aa).

Belongs to the bacterial ribosomal protein bL9 family.

Binds to the 23S rRNA. This chain is Large ribosomal subunit protein bL9, found in Rhodococcus erythropolis (strain PR4 / NBRC 100887).